Here is a 309-residue protein sequence, read N- to C-terminus: MAADEDELNLLVIIVDTNPIWWGKQALKESQFTLSKCMDAVMVLANAHLFMNRSNQLAVIASHIQESRFLYPGKNGRLGDFFGDPGNALPDCNPSGSKDGKYELLTAANEVIAEEIKDLMTKSDIKGQHTETLLAGSLAKALCYIHRASKAVKDNQEMKSRILVIKAAEDSALQYMNFMNVIFAAQKQNILIDACVLDSDSGLLQQACDITGGLYLKVPQMPSLLQYLLWVFLPDQDQRSQLILPPPIHVDYRAACFCHRSLIEIGYVCSVCLSIFCNFSPICTTCETAFKISLPPVLKAKKKKQKVSL.

The C4-type zinc-finger motif lies at 269–286 (CSVCLSIFCNFSPICTTC).

It belongs to the TFB4 family. In terms of assembly, part of a TFIID-containing RNA polymerase II pre-initiation complex that is composed of TBP and at least GTF2A1, GTF2A2, GTF2E1, GTF2E2, GTF2F1, GTF2H2, GTF2H3, GTF2H4, GTF2H5, GTF2B, TCEA1, ERCC2, ERCC3, TAF1, TAF2, TAF3, TAF4, TAF5, TAF6, TAF7, TAF8, TAF9, TAF10, TAF11, TAF12 and TAF13. Component of the 7-subunit TFIIH core complex composed of XPB/ERCC3, XPD/ERCC2, GTF2H1, GTF2H2, GTF2H3, GTF2H4 and GTF2H5, which is active in NER. The core complex associates with the 3-subunit CDK-activating kinase (CAK) module composed of CCNH/cyclin H, CDK7 and MNAT1 to form the 10-subunit holoenzyme (holo-TFIIH) active in transcription. Interacts with RARA; the interaction requires prior phosphorylation of RARA on 'Ser-369' which then enhances interaction of RARA with CDK7.

The protein resides in the nucleus. Its function is as follows. Component of the general transcription and DNA repair factor IIH (TFIIH) core complex, which is involved in general and transcription-coupled nucleotide excision repair (NER) of damaged DNA and, when complexed to CAK, in RNA transcription by RNA polymerase II. In NER, TFIIH acts by opening DNA around the lesion to allow the excision of the damaged oligonucleotide and its replacement by a new DNA fragment. In transcription, TFIIH has an essential role in transcription initiation. When the pre-initiation complex (PIC) has been established, TFIIH is required for promoter opening and promoter escape. Phosphorylation of the C-terminal tail (CTD) of the largest subunit of RNA polymerase II by the kinase module CAK controls the initiation of transcription. This is General transcription factor IIH subunit 3 (Gtf2h3) from Rattus norvegicus (Rat).